The following is a 588-amino-acid chain: Transport ATP-binding protein AarD (588 aa).

Residues 24 to 316 (LRISMLLGVV…LGTYYHAKAQ (293 aa)) enclose the ABC transmembrane type-1 domain. 6 consecutive transmembrane segments (helical) span residues 29 to 49 (LLGVVSGLLIIAQAWFLAVIL), 62 to 82 (LLTPFILLLAVFVLRALLTVI), 149 to 169 (IIPIMILIAIFPFNWAAALIL), 170 to 190 (FATAPLIPIFMALVGLGAADA), 250 to 270 (SGVLEFFASISIAIVAVYFGF), and 276 to 296 (LNFGSYGLPVTMFAGFLALIL). The ABC transporter domain occupies 350 to 583 (IEANKLEIYS…EGPFARLLAH (234 aa)). 383-390 (GQSGAGKS) is an ATP binding site.

The protein belongs to the ABC transporter superfamily.

It localises to the cell inner membrane. In terms of biological role, somehow involved in the cytochrome D branch of aerobic respiration. Seems to be a component of a transport system. The protein is Transport ATP-binding protein AarD (aarD) of Providencia stuartii.